Consider the following 95-residue polypeptide: 6 kDa early secretory antigenic target homolog (95 aa).

This sequence belongs to the WXG100 family. ESAT-6 subfamily. In terms of assembly, forms a tight 1:1 complex with EsxB.

It is found in the secreted. Its function is as follows. A secreted protein that might play a role in virulence. In Mycobacterium leprae (strain TN), this protein is 6 kDa early secretory antigenic target homolog (esxA).